The primary structure comprises 927 residues: Perchlorate reductase subunit alpha (927 aa).

A signal peptide (tat-type signal) is located at residues 1-31; that stretch reads MVQMTRRGFLLASGATLLGSSLSFRTLAAAA. In terms of domain architecture, 4Fe-4S Mo/W bis-MGD-type spans 53–116; sequence DKKTRGAHLI…CAHDYMYGPH (64 aa). H60, C64, C68, and C102 together coordinate [4Fe-4S] cluster. D198 contributes to the Mo-bis(molybdopterin guanine dinucleotide) binding site.

This sequence belongs to the prokaryotic molybdopterin-containing oxidoreductase family. In terms of assembly, heterotrimer of alpha, beta and gamma subunits. The cofactor is [4Fe-4S] cluster. Mo-bis(molybdopterin guanine dinucleotide) is required as a cofactor. Predicted to be exported by the Tat system. The position of the signal peptide cleavage has not been experimentally proven.

The protein resides in the periplasm. Its function is as follows. Component of the perchlorate reductase that catalyzes the reduction of perchlorate to chlorite and allows anaerobic growth on perchlorate as the sole electron acceptor. Is probably also able to reduce chlorate to chlorite. The alpha subunit is likely the catalytic subunit. This chain is Perchlorate reductase subunit alpha (pcrA), found in Dechloromonas aromatica (strain RCB).